Consider the following 122-residue polypeptide: UPF0102 protein RHECIAT_CH0000358 (122 aa).

Belongs to the UPF0102 family.

This chain is UPF0102 protein RHECIAT_CH0000358, found in Rhizobium etli (strain CIAT 652).